The sequence spans 538 residues: Putative cysteine ligase BshC (538 aa).

Residues 454–482 (LEKNAGFIQDQLQFLEKTVIRRIEEKENY) adopt a coiled-coil conformation.

It belongs to the BshC family.

Functionally, involved in bacillithiol (BSH) biosynthesis. May catalyze the last step of the pathway, the addition of cysteine to glucosamine malate (GlcN-Mal) to generate BSH. The sequence is that of Putative cysteine ligase BshC from Bacillus licheniformis (strain ATCC 14580 / DSM 13 / JCM 2505 / CCUG 7422 / NBRC 12200 / NCIMB 9375 / NCTC 10341 / NRRL NRS-1264 / Gibson 46).